A 175-amino-acid chain; its full sequence is ATP-dependent protease subunit HslV (175 aa).

The active site involves Thr-2. Na(+) contacts are provided by Gly-158, Cys-161, and Thr-164.

It belongs to the peptidase T1B family. HslV subfamily. As to quaternary structure, a double ring-shaped homohexamer of HslV is capped on each side by a ring-shaped HslU homohexamer. The assembly of the HslU/HslV complex is dependent on binding of ATP.

It localises to the cytoplasm. It carries out the reaction ATP-dependent cleavage of peptide bonds with broad specificity.. Allosterically activated by HslU binding. Its function is as follows. Protease subunit of a proteasome-like degradation complex believed to be a general protein degrading machinery. The protein is ATP-dependent protease subunit HslV of Haemophilus influenzae (strain PittGG).